The chain runs to 496 residues: Probable malate:quinone oxidoreductase (496 aa).

This sequence belongs to the MQO family. The cofactor is FAD.

It catalyses the reaction (S)-malate + a quinone = a quinol + oxaloacetate. It functions in the pathway carbohydrate metabolism; tricarboxylic acid cycle; oxaloacetate from (S)-malate (quinone route): step 1/1. This Prochlorococcus marinus (strain NATL1A) protein is Probable malate:quinone oxidoreductase.